The following is a 218-amino-acid chain: GTP cyclohydrolase 1 (218 aa).

Zn(2+) is bound by residues cysteine 109, histidine 112, and cysteine 180.

The protein belongs to the GTP cyclohydrolase I family. As to quaternary structure, toroid-shaped homodecamer, composed of two pentamers of five dimers.

The enzyme catalyses GTP + H2O = 7,8-dihydroneopterin 3'-triphosphate + formate + H(+). It functions in the pathway cofactor biosynthesis; 7,8-dihydroneopterin triphosphate biosynthesis; 7,8-dihydroneopterin triphosphate from GTP: step 1/1. The protein is GTP cyclohydrolase 1 of Aeromonas salmonicida (strain A449).